A 297-amino-acid polypeptide reads, in one-letter code: HTH-type transcriptional regulator ArgP (297 aa).

The region spanning 4-60 is the HTH lysR-type domain; it reads PDYRTLQALDAVIRERGFERAAQKLCITQSAVSQRIKQLENMFGQPLLVRTVPPRPT. Residues 21-40 constitute a DNA-binding region (H-T-H motif); the sequence is FERAAQKLCITQSAVSQRIK.

Belongs to the LysR transcriptional regulatory family. As to quaternary structure, homodimer.

In terms of biological role, controls the transcription of genes involved in arginine and lysine metabolism. The chain is HTH-type transcriptional regulator ArgP from Salmonella dublin (strain CT_02021853).